A 207-amino-acid chain; its full sequence is Pyridoxine/pyridoxamine 5'-phosphate oxidase (207 aa).

FMN-binding positions include 53–58 (RMVLLK), 68–69 (YT), Lys75, and Gln97. Residue Lys58 participates in substrate binding. Substrate is bound by residues Tyr115, Arg119, and Ser123. Residues 132 to 133 (QS) and Trp177 contribute to the FMN site. 183 to 185 (RLH) contributes to the substrate binding site. Arg187 contributes to the FMN binding site.

This sequence belongs to the pyridoxamine 5'-phosphate oxidase family. As to quaternary structure, homodimer. It depends on FMN as a cofactor.

It catalyses the reaction pyridoxamine 5'-phosphate + O2 + H2O = pyridoxal 5'-phosphate + H2O2 + NH4(+). The catalysed reaction is pyridoxine 5'-phosphate + O2 = pyridoxal 5'-phosphate + H2O2. It functions in the pathway cofactor metabolism; pyridoxal 5'-phosphate salvage; pyridoxal 5'-phosphate from pyridoxamine 5'-phosphate: step 1/1. It participates in cofactor metabolism; pyridoxal 5'-phosphate salvage; pyridoxal 5'-phosphate from pyridoxine 5'-phosphate: step 1/1. In terms of biological role, catalyzes the oxidation of either pyridoxine 5'-phosphate (PNP) or pyridoxamine 5'-phosphate (PMP) into pyridoxal 5'-phosphate (PLP). The protein is Pyridoxine/pyridoxamine 5'-phosphate oxidase of Bartonella henselae (strain ATCC 49882 / DSM 28221 / CCUG 30454 / Houston 1) (Rochalimaea henselae).